Reading from the N-terminus, the 355-residue chain is Histidine biosynthesis bifunctional protein HisB (355 aa).

A histidinol-phosphatase region spans residues 1–166 (MKQKILFIDR…DITKEIIKRN (166 aa)). Asp-9 serves as the catalytic Nucleophile. Mg(2+)-binding residues include Asp-9 and Asp-11. The active-site Proton donor is Asp-11. Cys-93, His-95, Cys-101, and Cys-103 together coordinate Zn(2+). Asp-130 contacts Mg(2+). The segment at 167–355 (RYREVIRETK…NTLPTSKGIL (189 aa)) is imidazoleglycerol-phosphate dehydratase.

In the N-terminal section; belongs to the histidinol-phosphatase family. It in the C-terminal section; belongs to the imidazoleglycerol-phosphate dehydratase family. Mg(2+) serves as cofactor. Zn(2+) is required as a cofactor.

The protein localises to the cytoplasm. It catalyses the reaction D-erythro-1-(imidazol-4-yl)glycerol 3-phosphate = 3-(imidazol-4-yl)-2-oxopropyl phosphate + H2O. The enzyme catalyses L-histidinol phosphate + H2O = L-histidinol + phosphate. It functions in the pathway amino-acid biosynthesis; L-histidine biosynthesis; L-histidine from 5-phospho-alpha-D-ribose 1-diphosphate: step 6/9. Its pathway is amino-acid biosynthesis; L-histidine biosynthesis; L-histidine from 5-phospho-alpha-D-ribose 1-diphosphate: step 8/9. The polypeptide is Histidine biosynthesis bifunctional protein HisB (Buchnera aphidicola subsp. Schizaphis graminum (strain Sg)).